Here is a 953-residue protein sequence, read N- to C-terminus: ALS2 C-terminal-like protein (953 aa).

MORN repeat units lie at residues 358–380, 381–403, 409–431, 432–454, 459–481, 483–505, 506–528, and 529–552; these read YEGE…DGRN, HVGD…QASE, YKCH…TSEV, YKGY…PQAP, YTGH…DRGE, YIGM…AGVC, YQGT…DDSL, and YEGT…NGFT. One can recognise a VPS9 domain in the interval 796–942; the sequence is LFPDARLLEF…IQKEDMRLHR (147 aa).

Homodimer. Forms a heteromeric complex with ALS2. Interacts with ALS2 and RAB5A.

The protein resides in the cytoplasm. Acts as a guanine nucleotide exchange factor (GEF) for Rab5 GTPase. Regulates the ALS2-mediated endosome dynamics. This Bos taurus (Bovine) protein is ALS2 C-terminal-like protein (ALS2CL).